The following is a 695-amino-acid chain: ATP-dependent zinc metalloprotease FtsH (695 aa).

Residues 1 to 15 (MNNNKQPKQGNFVKN) lie on the Cytoplasmic side of the membrane. The chain crosses the membrane as a helical span at residues 16 to 36 (ILMWVILAIVVVVGFNFFFSS). Residues 37 to 139 (NQSSVDKISY…QASSSGMWVQ (103 aa)) are Extracellular-facing. Residues 140 to 160 (ILSYIIPMLLFVGIFWLMMGG) form a helical membrane-spanning segment. The Cytoplasmic segment spans residues 161 to 695 (MGARGGGGGG…KEKSEDETAE (535 aa)). Residue 233–240 (GPPGTGKT) participates in ATP binding. His456 contributes to the Zn(2+) binding site. Glu457 is a catalytic residue. 2 residues coordinate Zn(2+): His460 and Asp532. Residues 657 to 695 (KDANANVDDFSNINIYNGDEKTDSKPEENKEKSEDETAE) form a disordered region. Basic and acidic residues predominate over residues 674 to 695 (GDEKTDSKPEENKEKSEDETAE).

It in the central section; belongs to the AAA ATPase family. In the C-terminal section; belongs to the peptidase M41 family. As to quaternary structure, homohexamer. Requires Zn(2+) as cofactor.

It is found in the cell membrane. In terms of biological role, acts as a processive, ATP-dependent zinc metallopeptidase for both cytoplasmic and membrane proteins. Plays a role in the quality control of integral membrane proteins. In Lactococcus lactis subsp. lactis (strain IL1403) (Streptococcus lactis), this protein is ATP-dependent zinc metalloprotease FtsH.